A 234-amino-acid polypeptide reads, in one-letter code: Small ribosomal subunit protein uS2 (234 aa).

This sequence belongs to the universal ribosomal protein uS2 family.

The protein is Small ribosomal subunit protein uS2 of Prochlorococcus marinus (strain AS9601).